We begin with the raw amino-acid sequence, 231 residues long: Probable septum site-determining protein MinC (231 aa).

The disordered stretch occupies residues 102–125 (KEKAPRPAPAPQAPTQNTTPVTKT). Over residues 114–123 (APTQNTTPVT) the composition is skewed to low complexity.

Belongs to the MinC family. In terms of assembly, interacts with MinD and FtsZ.

Cell division inhibitor that blocks the formation of polar Z ring septums. Rapidly oscillates between the poles of the cell to destabilize FtsZ filaments that have formed before they mature into polar Z rings. Prevents FtsZ polymerization. This chain is Probable septum site-determining protein MinC, found in Escherichia coli O45:K1 (strain S88 / ExPEC).